A 240-amino-acid polypeptide reads, in one-letter code: Mannose-binding protein C (240 aa).

The first 18 residues, 1 to 18 (MSLFPSLHLLLLIVMTAS), serve as a signal peptide directing secretion. 2 consecutive Collagen-like domains span residues 39–61 (SPGI…KGEP) and 67–97 (GLQG…GDSG). Pro46 is modified (hydroxyproline). The tract at residues 48–102 (KDGLDGAKGEKGEPGQGLIGLQGLPGMVGPQGSPGIPGLPGLKGQKGDSGIDPGN) is disordered. Over residues 49–60 (DGLDGAKGEKGE) the composition is skewed to basic and acidic residues. A hydroxyproline mark is found at Pro72, Pro81, and Pro87. Residues 104-122 (LANLRSELDNIKKWLIFAQ) are a coiled coil. One can recognise a C-type lectin domain in the interval 126–237 (VGKKLYLTNG…CSSQLSAVCE (112 aa)). Cystine bridges form between Cys147–Cys236 and Cys214–Cys228.

In terms of assembly, interacts with MASP1 and MASP2. Interacts with MEP1A and MEP1B and may inhibit their catalytic activity. Forms oligomeric complexes of 2 or 3 homotrimers. In terms of tissue distribution, expressed in liver. Weakly expressed in kidney and testis.

It localises to the secreted. Calcium-dependent lectin involved in innate immune defense. Binds mannose, fucose and N-acetylglucosamine on different microorganisms and activates the lectin complement pathway. Binds to late apoptotic cells, as well as to apoptotic blebs and to necrotic cells, but not to early apoptotic cells, facilitating their uptake by macrophages. According to some authors, it only binds mannose. The polypeptide is Mannose-binding protein C (Sus scrofa (Pig)).